The chain runs to 743 residues: Phosphoribosylformylglycinamidine synthase subunit PurL (743 aa).

H54 is a catalytic residue. The ATP site is built by Y57 and K96. E98 lines the Mg(2+) pocket. Residues 99–102 and R121 contribute to the substrate site; that span reads SHNH. The active-site Proton acceptor is H100. D122 is a Mg(2+) binding site. Q245 provides a ligand contact to substrate. D273 provides a ligand contact to Mg(2+). A substrate-binding site is contributed by 317-319; sequence ESQ. Residues D501 and G538 each contribute to the ATP site. A Mg(2+)-binding site is contributed by N539. S541 lines the substrate pocket.

The protein belongs to the FGAMS family. Monomer. Part of the FGAM synthase complex composed of 1 PurL, 1 PurQ and 2 PurS subunits.

The protein localises to the cytoplasm. It carries out the reaction N(2)-formyl-N(1)-(5-phospho-beta-D-ribosyl)glycinamide + L-glutamine + ATP + H2O = 2-formamido-N(1)-(5-O-phospho-beta-D-ribosyl)acetamidine + L-glutamate + ADP + phosphate + H(+). It participates in purine metabolism; IMP biosynthesis via de novo pathway; 5-amino-1-(5-phospho-D-ribosyl)imidazole from N(2)-formyl-N(1)-(5-phospho-D-ribosyl)glycinamide: step 1/2. Functionally, part of the phosphoribosylformylglycinamidine synthase complex involved in the purines biosynthetic pathway. Catalyzes the ATP-dependent conversion of formylglycinamide ribonucleotide (FGAR) and glutamine to yield formylglycinamidine ribonucleotide (FGAM) and glutamate. The FGAM synthase complex is composed of three subunits. PurQ produces an ammonia molecule by converting glutamine to glutamate. PurL transfers the ammonia molecule to FGAR to form FGAM in an ATP-dependent manner. PurS interacts with PurQ and PurL and is thought to assist in the transfer of the ammonia molecule from PurQ to PurL. The protein is Phosphoribosylformylglycinamidine synthase subunit PurL of Halalkalibacterium halodurans (strain ATCC BAA-125 / DSM 18197 / FERM 7344 / JCM 9153 / C-125) (Bacillus halodurans).